We begin with the raw amino-acid sequence, 199 residues long: MSEILDLEAKPRTEFGTGAARALRREGRVPAIIYGAGKTPVSISLEEKAITKYYRKPAFISQLINVTIDQKQYKVLPKAVELHPVTDMVRHVDFVFLEAKTQKMEVPIVYEGKERALGVKRGGYFNIVKRRVTLLCDVNNIPRNVTIDVTNMPIATSLKSSKIELPKGCSFVTKKEFVLATIIGRRGAKTEAEAPEVGK.

Belongs to the bacterial ribosomal protein bL25 family. CTC subfamily. As to quaternary structure, part of the 50S ribosomal subunit; part of the 5S rRNA/L5/L18/L25 subcomplex. Contacts the 5S rRNA. Binds to the 5S rRNA independently of L5 and L18.

Its function is as follows. This is one of the proteins that binds to the 5S RNA in the ribosome where it forms part of the central protuberance. This is Large ribosomal subunit protein bL25 from Rickettsia akari (strain Hartford).